The sequence spans 667 residues: Protein angel homolog 1 (667 aa).

2 positions are modified to phosphoserine: serine 77 and serine 105.

It belongs to the CCR4/nocturin family.

This Rattus norvegicus (Rat) protein is Protein angel homolog 1.